Here is a 285-residue protein sequence, read N- to C-terminus: NAC domain-containing protein 92 (285 aa).

Residues 20–170 (LPPGFRFHPT…EWVICRVFQK (151 aa)) enclose the NAC domain. The DNA-binding element occupies 117-176 (VGMKKTLVFYKGRAPKGVKTNWVMHEYRLEGKYCIENLPQTAKNEWVICRVFQKRADGTK).

As to quaternary structure, forms homodimers. Interacts with GLK1 and GLK2. Interacts with NLA. Post-translationally, ubiquitinated by NLA. Ubiquitination of NAC92 leads to its degradation by the proteasome during leaf senescence under nitrogen deficiency. Mostly expressed in roots and flowers, and, to a lower extent, in shoots and leaves. Particularly expressed in old and senescing tissues.

It is found in the nucleus. In terms of biological role, transcription activator that binds to DNA in promoters of target genes on a specific bipartite motif 5'-[ACG][CA]GT[AG](5-6n)[CT]AC[AG]-3'. Promotes lateral root development. Triggers the expression of senescence-associated genes during age-, salt- and dark-induced senescence through a regulatory network that may involve cross-talk with salt- and H(2)O(2)-dependent signaling pathways. Also regulates genes during seed germination. Positively regulates aging-induced cell death. Involved in age-related resistance (ARR) against Pseudomonas syringae pv. tomato and Hyaloperonospora arabidopsidis. Antagonizes GLK1 and GLK2 transcriptional activity, shifting the balance from chloroplast maintenance towards deterioration during leaf senescence. Promotes the expression of senescence-associated genes, including ENDO1/BFN1, SWEET15/SAG29 and SINA1/At3g13672, during senescence onset. In Arabidopsis thaliana (Mouse-ear cress), this protein is NAC domain-containing protein 92.